Consider the following 193-residue polypeptide: Phosphoheptose isomerase (193 aa).

The 157-residue stretch at 37–193 folds into the SIS domain; the sequence is LADSFKAGGK…QLIEKEMVKA (157 aa). Residue 52–54 coordinates substrate; sequence NGG. His-61 and Glu-65 together coordinate Zn(2+). Substrate-binding positions include Glu-65, 93–94, 119–121, Ser-124, and Gln-172; these read ND and STS. Residues Gln-172 and His-180 each coordinate Zn(2+).

Belongs to the SIS family. GmhA subfamily. In terms of assembly, homotetramer. The cofactor is Zn(2+).

Its subcellular location is the cytoplasm. It catalyses the reaction 2 D-sedoheptulose 7-phosphate = D-glycero-alpha-D-manno-heptose 7-phosphate + D-glycero-beta-D-manno-heptose 7-phosphate. It functions in the pathway carbohydrate biosynthesis; D-glycero-D-manno-heptose 7-phosphate biosynthesis; D-glycero-alpha-D-manno-heptose 7-phosphate and D-glycero-beta-D-manno-heptose 7-phosphate from sedoheptulose 7-phosphate: step 1/1. Its function is as follows. Catalyzes the isomerization of sedoheptulose 7-phosphate in D-glycero-D-manno-heptose 7-phosphate. This is Phosphoheptose isomerase from Yersinia enterocolitica serotype O:8 / biotype 1B (strain NCTC 13174 / 8081).